The following is a 484-amino-acid chain: MATAVNGAPRDAALWSSHEQMLAQPLKDSDAEVYDIIKKESNRQRVGLELIASENFASRAVLEALGSCLNNKYSEGYPGQRYYGGTEHIDELETLCQKRALQAYGLDPQCWGVNVQPYSGSPANFAVYTALVEPHGRIMGLDLPDGGHLTHGFMTDKKKISATSIFFESMAYKVNPDTGYIDYDRLEENARLFHPKLIIAGTSCYSRNLDYGRLRKIADENGAYLMADMAHISGLVVAGVVPSPFEHCHVVTTTTHKTLRGCRAGMIFYRRGVRSVDPKTGKEILYNLESLINSAVFPGLQGGPHNHAIAGVAVALKQAMTPEFKEYQRQVVANCRALSAALVELGYKIVTGGSDNHLILVDLRSKGTDGGRAEKVLEACSIACNKNTCPGDKSALRPSGLRLGTPALTSRGLLEKDFQKVAHFIHRGIELTVQIQDDTGPRATLKEFKEKLAGDEKHQRAVRALRQEVESFAALFPLPGLPGF.

Ala-2 bears the N-acetylalanine mark. A Deamidated asparagine; alternate modification is found at Asn-6. Residues 6–7 (NG) constitute a cross-link (isoaspartyl glycine isopeptide (Asn-Gly); alternate). Cys-204 serves as the catalytic Nucleophile. Residue His-256 is the Proton donor of the active site. Lys-257 is subject to N6-(pyridoxal phosphate)lysine.

It belongs to the SHMT family. In terms of assembly, homotetramer. Identified in complex with ABRAXAS2 and the other subunits of the BRISC complex, at least composed of ABRAXAS2, BRCC3/BRCC36, BABAM2 and BABAM1/NBA1. Pyridoxal 5'-phosphate serves as cofactor. Post-translationally, deamidation of asparagine produces alternatively aspartate or isoaspartate, which in turn can be converted to aspartate through carboxylmethylation/demethylation.

It is found in the cytoplasm. It catalyses the reaction (6R)-5,10-methylene-5,6,7,8-tetrahydrofolate + glycine + H2O = (6S)-5,6,7,8-tetrahydrofolate + L-serine. The protein operates within one-carbon metabolism; tetrahydrofolate interconversion. In terms of biological role, interconversion of serine and glycine. The protein is Serine hydroxymethyltransferase, cytosolic (SHMT1) of Oryctolagus cuniculus (Rabbit).